We begin with the raw amino-acid sequence, 166 residues long: NAD(P)H-quinone oxidoreductase subunit I, chloroplastic (166 aa).

4Fe-4S ferredoxin-type domains lie at 55-84 (GRIH…VDWK) and 95-124 (LNYS…MTEE). Residues Cys64, Cys67, Cys70, Cys74, Cys104, Cys107, Cys110, and Cys114 each coordinate [4Fe-4S] cluster.

This sequence belongs to the complex I 23 kDa subunit family. NDH is composed of at least 16 different subunits, 5 of which are encoded in the nucleus. Requires [4Fe-4S] cluster as cofactor.

It is found in the plastid. It localises to the chloroplast thylakoid membrane. The catalysed reaction is a plastoquinone + NADH + (n+1) H(+)(in) = a plastoquinol + NAD(+) + n H(+)(out). It carries out the reaction a plastoquinone + NADPH + (n+1) H(+)(in) = a plastoquinol + NADP(+) + n H(+)(out). Functionally, NDH shuttles electrons from NAD(P)H:plastoquinone, via FMN and iron-sulfur (Fe-S) centers, to quinones in the photosynthetic chain and possibly in a chloroplast respiratory chain. The immediate electron acceptor for the enzyme in this species is believed to be plastoquinone. Couples the redox reaction to proton translocation, and thus conserves the redox energy in a proton gradient. The chain is NAD(P)H-quinone oxidoreductase subunit I, chloroplastic from Enydra sessilis (Smallray swampwort).